The chain runs to 104 residues: L-rhamnose mutarotase (104 aa).

Position 18 (Y18) interacts with substrate. Catalysis depends on H22, which acts as the Proton donor. Substrate contacts are provided by residues Y41 and W76–W77.

This sequence belongs to the rhamnose mutarotase family. Homodimer.

The protein resides in the cytoplasm. It catalyses the reaction alpha-L-rhamnose = beta-L-rhamnose. It participates in carbohydrate metabolism; L-rhamnose metabolism. Involved in the anomeric conversion of L-rhamnose. This is L-rhamnose mutarotase from Salmonella heidelberg (strain SL476).